A 98-amino-acid polypeptide reads, in one-letter code: NADH-quinone oxidoreductase subunit K (98 aa).

Transmembrane regions (helical) follow at residues 1–21, 27–47, and 59–79; these read MGHL…GIFL, IVLL…FIAF, and FVFF…AILV.

This sequence belongs to the complex I subunit 4L family. NDH-1 is composed of 14 different subunits. Subunits NuoA, H, J, K, L, M, N constitute the membrane sector of the complex.

Its subcellular location is the cell inner membrane. The enzyme catalyses a quinone + NADH + 5 H(+)(in) = a quinol + NAD(+) + 4 H(+)(out). Functionally, NDH-1 shuttles electrons from NADH, via FMN and iron-sulfur (Fe-S) centers, to quinones in the respiratory chain. The immediate electron acceptor for the enzyme in this species is believed to be ubiquinone. Couples the redox reaction to proton translocation (for every two electrons transferred, four hydrogen ions are translocated across the cytoplasmic membrane), and thus conserves the redox energy in a proton gradient. This is NADH-quinone oxidoreductase subunit K from Xanthomonas oryzae pv. oryzae (strain PXO99A).